The chain runs to 525 residues: Acyl-lipid (9-3)-desaturase (525 aa).

Positions 102 to 176 constitute a Cytochrome b5 heme-binding domain; that stretch reads KSTHPLSEVA…LQDFYIGDVE (75 aa). The heme site is built by His-137 and His-159. A helical membrane pass occupies residues 216–236; it reads VAIFAASIAIICWSKTISAVL. The short motif at 254 to 258 is the Histidine box-1 element; it reads HDFLH. The chain crosses the membrane as a helical span at residues 266-286; that stretch reads WLNEVVGYVIGNAVLGFSTGW. Positions 291-295 match the Histidine box-2 motif; that stretch reads HNLHH. A run of 3 helical transmembrane segments spans residues 340-360, 378-398, and 401-421; these read QHLF…FWSW, GTVL…LPGW, and LVWM…VFVL. The Histidine box-3 signature appears at 462 to 466; sequence QIEHH.

The protein belongs to the fatty acid desaturase type 1 family.

The protein resides in the membrane. The enzyme catalyses (9Z,12Z,15Z)-octadecatrienoyl-containing glycerolipid + 2 Fe(II)-[cytochrome b5] + O2 + 2 H(+) = (6Z,9Z,12Z,15Z)-octadecatetraenoyl-containing glycerolipid + 2 Fe(III)-[cytochrome b5] + 2 H2O. The catalysed reaction is a (9Z,12Z)-octadecadienoyl-containing glycerolipid + 2 Fe(II)-[cytochrome b5] + O2 + 2 H(+) = (6Z,9Z,12Z)-octadecatrienoyl-containing glycerolipid + 2 Fe(III)-[cytochrome b5] + 2 H2O. The protein operates within lipid metabolism; polyunsaturated fatty acid biosynthesis. In terms of biological role, fatty acid desaturase able to introduce a delta(6)-double bond into delta(9)-unsaturated fatty-acid substrates. Can use both linoleic acid (18:2(9Z,12Z)) and alpha-linolenic acid (18:3(9Z,12Z,15Z)) as substrates. Required for the biosynthesis of arachidonic acid (20:4(5z,8Z,11Z,14Z)). In Physcomitrium patens (Spreading-leaved earth moss), this protein is Acyl-lipid (9-3)-desaturase.